The primary structure comprises 1953 residues: Putative surface-exposed virulence protein BigA (1953 aa).

The signal sequence occupies residues 1-27 (MNPMQKKKLISIAIALTLQSYYIPAIA). Disordered regions lie at residues 31 to 50 (NDDE…EKRA), 88 to 258 (GGGD…TFSN), and 1496 to 1517 (TTAP…PQQL). One copy of the 1; truncated repeat lies at 101–103 (PDN). Residues 101–252 (PDNGGDVTPP…DDDDTPPDDS (152 aa)) form a 15 X 11 AA tandem repeats region. The stretch at 104–113 (GGDVTPPDDG) is one 2; truncated repeat. The 3; truncated repeat unit spans residues 114–122 (GNVTPPDDG). Tandem repeats lie at residues 123–133 (GNVTPPDDGGD), 134–144 (DNVTPPDDSGD), 145–155 (DDVAPPDDSGD), 156–166 (DDVTPPDDSGD), 167–177 (DDVTPPDDSGD), 178–188 (GDVTPPDDSGD), 189–199 (DDVTPPDDSGD), 200–210 (DDVTPPDDSGD), 211–221 (DDVTPPDDSGD), 222–232 (DDVTPPDDSGD), and 233–243 (DDVTPPDDSGD). Composition is skewed to acidic residues over residues 141–177 (DSGD…DSGD) and 185–249 (DSGD…DTPP). Residues 244–252 (DDDTPPDDS) form a 15; truncated repeat. In terms of domain architecture, Autotransporter spans 1649–1952 (SGAQATTVFR…GFMLNVKKTF (304 aa)).

This Salmonella typhimurium (strain LT2 / SGSC1412 / ATCC 700720) protein is Putative surface-exposed virulence protein BigA (bigA).